A 466-amino-acid polypeptide reads, in one-letter code: 3-isopropylmalate dehydratase large subunit (466 aa).

[4Fe-4S] cluster is bound by residues cysteine 347, cysteine 407, and cysteine 410.

The protein belongs to the aconitase/IPM isomerase family. LeuC type 1 subfamily. In terms of assembly, heterodimer of LeuC and LeuD. [4Fe-4S] cluster serves as cofactor.

The enzyme catalyses (2R,3S)-3-isopropylmalate = (2S)-2-isopropylmalate. It participates in amino-acid biosynthesis; L-leucine biosynthesis; L-leucine from 3-methyl-2-oxobutanoate: step 2/4. Functionally, catalyzes the isomerization between 2-isopropylmalate and 3-isopropylmalate, via the formation of 2-isopropylmaleate. The sequence is that of 3-isopropylmalate dehydratase large subunit from Escherichia coli (strain 55989 / EAEC).